The following is a 471-amino-acid chain: NALCN channel auxiliary factor 2 (471 aa).

The helical transmembrane segment at 47–67 (LASLLFFTVLLADHLWLCAGA) threads the bilayer. Residues 76 to 115 (SAMRPPWGAGRERQPVPPRAVLPPPPPSPGEPSASSGTCG) are disordered. Residues 90-105 (PVPPRAVLPPPPPSPG) show a composition bias toward pro residues. N-linked (GlcNAc...) asparagine glycosylation occurs at Asn-120. Disordered stretches follow at residues 158–178 (EPTT…APEF) and 399–424 (HYHP…GGSR). Residues 161 to 171 (TPAPPLRPPDS) show a composition bias toward pro residues. Residues 432-452 (LCVLVLILLHTVVSFSSSQSG) traverse the membrane as a helical segment.

It belongs to the NALF family.

The protein resides in the membrane. Probable component of the NALCN channel complex, a channel that regulates the resting membrane potential and controls neuronal excitability. In Mus musculus (Mouse), this protein is NALCN channel auxiliary factor 2 (Nalf2).